A 72-amino-acid chain; its full sequence is Potassium channel toxin epsilon-KTx 1.1 (72 aa).

The signal sequence occupies residues 1–30; that stretch reads MKLSCGFLLILLVLSAMIATFSEVEAMKPS. Cystine bridges form between Cys34-Cys42, Cys37-Cys58, Cys41-Cys51, and Cys46-Cys56. The propeptide occupies 60–72; it reads GRSDLNDELEKYQ.

Belongs to the short scorpion toxin superfamily. Potassium channel inhibitor family. Epsilon-KTx 01 subfamily. Expressed by the venom gland.

Its subcellular location is the secreted. Potassium channel blocker. At 3 uM, this toxin blocks voltage-independently voltage-gated potassium channels rKv1.2/KCNA2 (25%), hKv1.3/KCNA3 (27%), rKv4.2/KCND2 (25%), Kv10.1/KCNH1/EAG1 (15%), Kv11/hERG (12%), and Shaker-IR (10%). On hKv1.3/KCNA3, the IC(50) is 17.1 +-3.3 uM. The polypeptide is Potassium channel toxin epsilon-KTx 1.1 (Tityus serrulatus (Brazilian scorpion)).